We begin with the raw amino-acid sequence, 96 residues long: Protein RnfH (96 aa).

It belongs to the UPF0125 (RnfH) family.

The polypeptide is Protein RnfH (Hahella chejuensis (strain KCTC 2396)).